Consider the following 1066-residue polypeptide: Phosphatidylinositol 4-kinase PIK1 (1066 aa).

The PIK helical domain maps to 1–133; that stretch reads MHKASSSKKS…GFQVARRVLN (133 aa). Serine 10 and serine 236 each carry phosphoserine. 3 disordered regions span residues 218–240, 303–411, and 564–624; these read KKTS…PIDL, DGKN…KKAN, and NENR…LGDM. Positions 342–356 are enriched in acidic residues; sequence NNEDETGGETEEDAD. Polar residues-rich tracts occupy residues 374-411 and 570-597; these read QPRT…KKAN and STLT…NEGL. The residue at position 384 (serine 384) is a Phosphoserine. At threonine 394 the chain carries Phosphothreonine. Phosphoserine occurs at positions 396 and 592. The segment covering 598-609 has biased composition (low complexity); that stretch reads SSTSRSDSASTA. Positions 770–1049 constitute a PI3K/PI4K catalytic domain; the sequence is ATKKERIRKT…FLIGKSLGSI (280 aa). Positions 776 to 782 are G-loop; it reads IRKTSEY. The segment at 915 to 923 is catalytic loop; it reads QVKDRHNGN. The tract at residues 934 to 958 is activation loop; it reads HIDFGFMLSNSPGSVGFEAAPFKLT.

Belongs to the PI3/PI4-kinase family. Type III PI4K subfamily. Interacts with FRQ1.

It localises to the nucleus. Its subcellular location is the golgi apparatus. The protein resides in the trans-Golgi network. The catalysed reaction is a 1,2-diacyl-sn-glycero-3-phospho-(1D-myo-inositol) + ATP = a 1,2-diacyl-sn-glycero-3-phospho-(1D-myo-inositol 4-phosphate) + ADP + H(+). In terms of biological role, acts on phosphatidylinositol (PI) in the first committed step in the production of the second messenger inositol 1,4,5,-trisphosphate. PIK1 is part of a nuclear phosphoinositide cycle and could control cytokinesis through the actin cytoskeleton. Involved in the response to mating pheromone. In Saccharomyces cerevisiae (strain ATCC 204508 / S288c) (Baker's yeast), this protein is Phosphatidylinositol 4-kinase PIK1.